The following is a 393-amino-acid chain: DNA/RNA-binding protein KIN17 (393 aa).

The segment at Cys-28–His-50 adopts a C2H2-type zinc-finger fold. A winged helix-turn-helix (wHTH) region spans residues Gln-51–Lys-160. Lys-135 is modified (N6,N6,N6-trimethyllysine; by METTL22; in vitro). Position 135 is an N6-methyllysine (Lys-135). The stretch at Glu-147 to Gly-180 forms a coiled coil. Residues Lys-209–Thr-224 are compositionally biased toward low complexity. The interval Lys-209–Ala-260 is disordered. Positions Gln-250–Thr-277 form a coiled coil. The tract at residues Glu-284–Thr-334 is C-terminal subdomain A. The segment at Gly-340–Lys-391 is C-terminal subdomain B.

The protein belongs to the KIN17 family. As to quaternary structure, associated with DNA polymerase alpha, RFC1 and cyclin A, in multiprotein DNA replication complexes. Also associates with replication origins at the G1/S phase boundary and throughout the S phase in vivo. In terms of assembly, (Microbial infection) Interacts with SV40 large T antigen. As to expression, ubiquitously expressed in all tissues examined, with highest levels in skeletal muscle, heart and testis. Differentially expressed in non-tumorigenic and tumorigenic cell lines. Highly expressed in proliferating epithelial keratinocyte cells in vitro (at protein level).

The protein localises to the nucleus. It is found in the cytoplasm. In terms of biological role, involved in DNA replication and the cellular response to DNA damage. May participate in DNA replication factories and create a bridge between DNA replication and repair mediated by high molecular weight complexes. May play a role in illegitimate recombination and regulation of gene expression. May participate in mRNA processing. Binds, in vitro, to double-stranded DNA. Also shown to bind preferentially to curved DNA in vitro and in vivo. Binds via its C-terminal domain to RNA in vitro. In Homo sapiens (Human), this protein is DNA/RNA-binding protein KIN17.